The following is a 364-amino-acid chain: Peroxidase (364 aa).

Positions 1–20 (MKLSLFSTFAAVIIGALALP) are cleaved as a signal peptide. Q21 is modified (pyrrolidone carboxylic acid). 4 cysteine pairs are disulfide-bonded: C32-C44, C43-C313, C63-C149, and C277-C342. Residue H76 is the Proton acceptor of the active site. Positions 77, 95, 97, and 99 each coordinate Ca(2+). N163 carries an N-linked (GlcNAc...) (high mannose) asparagine glycan. H204 provides a ligand contact to heme b. Positions 205, 222, 224, 227, and 229 each coordinate Ca(2+).

This sequence belongs to the peroxidase family. Ligninase subfamily. It depends on Ca(2+) as a cofactor. The cofactor is heme b.

It localises to the secreted. It carries out the reaction 2 a phenolic donor + H2O2 = 2 a phenolic radical donor + 2 H2O. This Arthromyces ramosus protein is Peroxidase.